Consider the following 503-residue polypeptide: Probable cytosol aminopeptidase (503 aa).

Residues Lys268 and Asp273 each contribute to the Mn(2+) site. Lys280 is a catalytic residue. The Mn(2+) site is built by Asp291, Asp350, and Glu352. Residue Arg354 is part of the active site.

Belongs to the peptidase M17 family. It depends on Mn(2+) as a cofactor.

It localises to the cytoplasm. The catalysed reaction is Release of an N-terminal amino acid, Xaa-|-Yaa-, in which Xaa is preferably Leu, but may be other amino acids including Pro although not Arg or Lys, and Yaa may be Pro. Amino acid amides and methyl esters are also readily hydrolyzed, but rates on arylamides are exceedingly low.. The enzyme catalyses Release of an N-terminal amino acid, preferentially leucine, but not glutamic or aspartic acids.. Functionally, presumably involved in the processing and regular turnover of intracellular proteins. Catalyzes the removal of unsubstituted N-terminal amino acids from various peptides. The chain is Probable cytosol aminopeptidase from Nocardia farcinica (strain IFM 10152).